The following is a 179-amino-acid chain: Large ribosomal subunit protein uL5 (179 aa).

The protein belongs to the universal ribosomal protein uL5 family. In terms of assembly, part of the 50S ribosomal subunit; part of the 5S rRNA/L5/L18/L25 subcomplex. Contacts the 5S rRNA and the P site tRNA. Forms a bridge to the 30S subunit in the 70S ribosome.

This is one of the proteins that bind and probably mediate the attachment of the 5S RNA into the large ribosomal subunit, where it forms part of the central protuberance. In the 70S ribosome it contacts protein S13 of the 30S subunit (bridge B1b), connecting the 2 subunits; this bridge is implicated in subunit movement. Contacts the P site tRNA; the 5S rRNA and some of its associated proteins might help stabilize positioning of ribosome-bound tRNAs. The protein is Large ribosomal subunit protein uL5 of Desulfotalea psychrophila (strain LSv54 / DSM 12343).